Here is a 557-residue protein sequence, read N- to C-terminus: Potassium-transporting ATPase potassium-binding subunit (557 aa).

12 consecutive transmembrane segments (helical) span residues G5–S25, L63–G83, G132–I152, L170–I190, F253–V273, L283–V303, V329–A349, A356–V376, G379–G399, L416–M436, L484–A504, and L526–A546.

Belongs to the KdpA family. In terms of assembly, the system is composed of three essential subunits: KdpA, KdpB and KdpC.

The protein resides in the cell inner membrane. In terms of biological role, part of the high-affinity ATP-driven potassium transport (or Kdp) system, which catalyzes the hydrolysis of ATP coupled with the electrogenic transport of potassium into the cytoplasm. This subunit binds the periplasmic potassium ions and delivers the ions to the membrane domain of KdpB through an intramembrane tunnel. The sequence is that of Potassium-transporting ATPase potassium-binding subunit from Shigella flexneri.